The chain runs to 580 residues: Conglutin beta 3 (580 aa).

Residues 1–30 (MAKMRVRFPTLVLLLGIVFLMAVSIGIAYG) form the signal peptide. Composition is skewed to basic and acidic residues over residues 37 to 72 (NHER…RESE) and 79 to 92 (REQR…REQE). Residues 37–165 (NHERPQEREQ…DSRRQRNPYY (129 aa)) form a disordered region. The segment covering 124–133 (QGSSSSSRRQ) has biased composition (low complexity). The segment covering 134–145 (SGYERREQREER) has biased composition (basic and acidic residues). Cupin type-1 domains lie at 164-322 (YYFS…EEIQ) and 381-538 (FNLR…EDVE). Residues N229 and N488 are each glycosylated (N-linked (GlcNAc...) asparagine). Positions 549-569 (FANAQPQQQQQREREGRHGRR) are disordered.

It belongs to the 7S seed storage protein family. In terms of assembly, component of globulins complexes which accumulate in seeds.

Functionally, seed storage protein. Accumulates during seed development and is hydrolyzed after germination to provide a carbon and nitrogen source for the developing seedling. The sequence is that of Conglutin beta 3 from Lupinus angustifolius (Narrow-leaved blue lupine).